The sequence spans 110 residues: uncharacterized protein (110 aa).

A coiled-coil region spans residues 16–46 (ELDKLRECEERLSVIEKQKQSSKQESEETYI). Basic and acidic residues predominate over residues 85–96 (EEKDKKCQRKPE). The disordered stretch occupies residues 85–110 (EEKDKKCQRKPEAPSTPAVTIRSKRQ).

This is an uncharacterized protein from Bacillus subtilis (strain 168).